The chain runs to 240 residues: Flavin-dependent thymidylate synthase (240 aa).

The 223-residue stretch at I13–Q235 folds into the ThyX domain. FAD-binding positions include S64, R87 to R89, and E95. DUMP-binding positions include E84–R87, E95–R99, and R167. Residues R87 to S97 carry the ThyX motif motif. FAD is bound by residues N183–R185 and N189. A dUMP-binding site is contributed by R194. R194 functions as the Involved in ionization of N3 of dUMP, leading to its activation in the catalytic mechanism.

The protein belongs to the thymidylate synthase ThyX family. Homotetramer. The cofactor is FAD.

The enzyme catalyses dUMP + (6R)-5,10-methylene-5,6,7,8-tetrahydrofolate + NADPH + H(+) = dTMP + (6S)-5,6,7,8-tetrahydrofolate + NADP(+). It participates in pyrimidine metabolism; dTTP biosynthesis. Its function is as follows. Catalyzes the reductive methylation of 2'-deoxyuridine-5'-monophosphate (dUMP) to 2'-deoxythymidine-5'-monophosphate (dTMP) while utilizing 5,10-methylenetetrahydrofolate (mTHF) as the methyl donor, and NADPH and FADH(2) as the reductant. This Tropheryma whipplei (strain TW08/27) (Whipple's bacillus) protein is Flavin-dependent thymidylate synthase.